Consider the following 595-residue polypeptide: TNF receptor-associated factor family protein DDB_G0272348 (595 aa).

The interval 14–64 (SFTNNNSNNNNNNNNNSNSNNNNNNNNNNINNNNNHNNNNKNNSNNKNEIN) is disordered. The span at 17–64 (NNNSNNNNNNNNNSNSNNNNNNNNNNINNNNNHNNNNKNNSNNKNEIN) shows a compositional bias: low complexity. An RING-type; degenerate zinc finger spans residues 87–134 (CTICSDLLVNSFHADKFKAVQCKNGHYTTCLNCWEKHLEKKKNCIQCG). TRAF-type zinc fingers lie at residues 189-253 (EHLK…INKE) and 254-311 (SHNA…SKLS). The stretch at 348–410 (LLNGQNKKIT…QQQQSQQQQQ (63 aa)) forms a coiled coil. Positions 409–440 (QQSQQQQQSQQSQQNNNSNSHFINNNNNNINN) are enriched in low complexity. The interval 409–450 (QQSQQQQQSQQSQQNNNSNSHFINNNNNNINNVQMSDSPNGG) is disordered. A compositionally biased stretch (polar residues) spans 441–450 (VQMSDSPNGG). The 129-residue stretch at 456–584 (VYKNKWVISN…NDSITIEIEI (129 aa)) folds into the MATH domain.

It belongs to the TNF receptor-associated factor family. A subfamily.

It localises to the cytoplasm. Probable adapter protein and signal transducer that links members of the tumor necrosis factor receptor family to different signaling pathways by association with the receptor cytoplasmic domain and kinases. In Dictyostelium discoideum (Social amoeba), this protein is TNF receptor-associated factor family protein DDB_G0272348.